The chain runs to 505 residues: Amidophosphoribosyltransferase (505 aa).

The active-site Nucleophile is the C2. The 234-residue stretch at 2–235 (CGIVGIVSQS…AGEAVYVTFD (234 aa)) folds into the Glutamine amidotransferase type-2 domain. Mg(2+) is bound by residues T306, D368, and D369. Residues 484-505 (RNDNAKKKREKQASNLEIYNEQ) form a disordered region. Residues 496–505 (ASNLEIYNEQ) show a composition bias toward polar residues.

In the C-terminal section; belongs to the purine/pyrimidine phosphoribosyltransferase family. It depends on Mg(2+) as a cofactor.

It carries out the reaction 5-phospho-beta-D-ribosylamine + L-glutamate + diphosphate = 5-phospho-alpha-D-ribose 1-diphosphate + L-glutamine + H2O. It participates in purine metabolism; IMP biosynthesis via de novo pathway; N(1)-(5-phospho-D-ribosyl)glycinamide from 5-phospho-alpha-D-ribose 1-diphosphate: step 1/2. Its function is as follows. Catalyzes the formation of phosphoribosylamine from phosphoribosylpyrophosphate (PRPP) and glutamine. This chain is Amidophosphoribosyltransferase, found in Haemophilus influenzae (strain ATCC 51907 / DSM 11121 / KW20 / Rd).